Reading from the N-terminus, the 496-residue chain is Glutamate--tRNA ligase (496 aa).

The 'HIGH' region signature appears at 11–21 (PSPTGLLHIGN). A 'KMSKS' region motif is present at residues 255-259 (KLSKR). Residue K258 participates in ATP binding.

This sequence belongs to the class-I aminoacyl-tRNA synthetase family. Glutamate--tRNA ligase type 1 subfamily. In terms of assembly, monomer.

It localises to the cytoplasm. The enzyme catalyses tRNA(Glu) + L-glutamate + ATP = L-glutamyl-tRNA(Glu) + AMP + diphosphate. Functionally, catalyzes the attachment of glutamate to tRNA(Glu) in a two-step reaction: glutamate is first activated by ATP to form Glu-AMP and then transferred to the acceptor end of tRNA(Glu). The protein is Glutamate--tRNA ligase of Streptococcus pyogenes serotype M49 (strain NZ131).